A 347-amino-acid chain; its full sequence is Protein RecA (347 aa).

Residue 65–72 (GPESSGKT) coordinates ATP. The tract at residues 328-347 (SPAQPEAPAAGEKPEQEEEF) is disordered.

This sequence belongs to the RecA family.

Its subcellular location is the cytoplasm. Can catalyze the hydrolysis of ATP in the presence of single-stranded DNA, the ATP-dependent uptake of single-stranded DNA by duplex DNA, and the ATP-dependent hybridization of homologous single-stranded DNAs. It interacts with LexA causing its activation and leading to its autocatalytic cleavage. The sequence is that of Protein RecA from Vibrio parahaemolyticus serotype O3:K6 (strain RIMD 2210633).